A 418-amino-acid polypeptide reads, in one-letter code: Thyroid hormone receptor alpha (418 aa).

The interval 1-41 (MDQNLSGLDCLSEPDEKRWPDGKRKRKNSQCMGKSGMSGDS) is disordered. The tract at residues 1–60 (MDQNLSGLDCLSEPDEKRWPDGKRKRKNSQCMGKSGMSGDSSVSLLSAGYIPSYLTKDEP) is modulating. Cys61, Cys64, Cys78, Cys81, Cys99, Cys105, Cys115, and Cys118 together coordinate Zn(2+). NR C4-type zinc fingers lie at residues 61–81 (CVVCSDKATGYHYRCITCEGC) and 99–123 (CKYDGCCIIDKITRNQCQLCRFKKC). Residues 61 to 135 (CVVCSDKATG…VGMAMDLVLD (75 aa)) constitute a DNA-binding region (nuclear receptor). The region spanning 171–415 (EEWELIRIVT…PPLFLEVFED (245 aa)) is the NR LBD domain. Arg236 and Ser285 together coordinate 3,3',5-triiodo-L-thyronine.

It belongs to the nuclear hormone receptor family. NR1 subfamily. As to expression, highest level of expression in erythrocytes. Also expressed in liver, tail, eye, muscle and skin.

Its subcellular location is the nucleus. Its function is as follows. Nuclear hormone receptor that can act as a repressor or activator of transcription. High affinity receptor for thyroid hormones, including triiodothyronine and thyroxine. The protein is Thyroid hormone receptor alpha (thra) of Aquarana catesbeiana (American bullfrog).